Reading from the N-terminus, the 274-residue chain is Putative phosphoenolpyruvate synthase regulatory protein (274 aa).

154-161 (GVSRCGKT) contacts ADP.

The protein belongs to the pyruvate, phosphate/water dikinase regulatory protein family. PSRP subfamily.

The enzyme catalyses [pyruvate, water dikinase] + ADP = [pyruvate, water dikinase]-phosphate + AMP + H(+). It catalyses the reaction [pyruvate, water dikinase]-phosphate + phosphate + H(+) = [pyruvate, water dikinase] + diphosphate. Bifunctional serine/threonine kinase and phosphorylase involved in the regulation of the phosphoenolpyruvate synthase (PEPS) by catalyzing its phosphorylation/dephosphorylation. The protein is Putative phosphoenolpyruvate synthase regulatory protein of Pseudomonas aeruginosa (strain LESB58).